The chain runs to 621 residues: uncharacterized protein (621 aa).

Composition is skewed to low complexity over residues 1 to 10 (MIEDNINNNE), 63 to 79 (TEPL…TTPS), 137 to 182 (NNNN…NNFN), and 309 to 347 (NQSI…NNNN). Disordered regions lie at residues 1–29 (MIED…DKNN), 63–100 (TEPL…SNKT), 135–194 (DDNN…KDND), 307–374 (KTNQ…EDDT), 430–471 (YNNN…IAKR), 492–539 (KQSQ…IKII), and 594–614 (PTQI…SPSK). Residues 348–357 (STLTSSNSLS) are compositionally biased toward polar residues. Low complexity-rich tracts occupy residues 431 to 459 (NNNN…NNNN), 496 to 539 (NNNN…IKII), and 597 to 613 (INSN…SSPS).

This is an uncharacterized protein from Dictyostelium discoideum (Social amoeba).